Consider the following 231-residue polypeptide: 7-cyano-7-deazaguanine synthase (231 aa).

8-18 (FSGGQDSTTCL) is a binding site for ATP. Zn(2+)-binding residues include Cys-188, Cys-197, Cys-200, and Cys-203.

Belongs to the QueC family. Requires Zn(2+) as cofactor.

It catalyses the reaction 7-carboxy-7-deazaguanine + NH4(+) + ATP = 7-cyano-7-deazaguanine + ADP + phosphate + H2O + H(+). Its pathway is purine metabolism; 7-cyano-7-deazaguanine biosynthesis. Functionally, catalyzes the ATP-dependent conversion of 7-carboxy-7-deazaguanine (CDG) to 7-cyano-7-deazaguanine (preQ(0)). In Sodalis glossinidius (strain morsitans), this protein is 7-cyano-7-deazaguanine synthase.